The sequence spans 398 residues: MSEKLWEKGYTVDEEVEKFTVGDDYIVDMRIIKYDIKASIVHSKMLQRTGLLTQEEQKKIEEALNELLHLVEEGKFQIKPEDEDCHTAIENFLVKKLGETGKKIHTARSRNDQVLTALRLMYKDELKKIKDLVVELQKSLDGFIERFGQIKFAGFTHTRKAMPTDFATWAGALRDALQDDLKLLETVYDIIDQSPLGTGAGYGVPIEVDREFTAKELGFSRVQWNPIYTQNSRGKFEYLLLHVLSQISYDLNRFASDIIFFSLPEIGFLKLPKELCTGSSIMPHKINPDPLELVRAYHHFVVSRMVMAVSLPSNLILGYHRDLQLLKKPVIESIDVVKNILRIMKIIFDRIEVDREKSEDSITEEVLATHRVYELVKKGIPFRDAYRMVAEKYGREKD.

It belongs to the lyase 1 family. Argininosuccinate lyase subfamily.

The protein localises to the cytoplasm. It catalyses the reaction 2-(N(omega)-L-arginino)succinate = fumarate + L-arginine. The protein operates within amino-acid biosynthesis; L-arginine biosynthesis; L-arginine from L-ornithine and carbamoyl phosphate: step 3/3. In Thermotoga neapolitana (strain ATCC 49049 / DSM 4359 / NBRC 107923 / NS-E), this protein is Argininosuccinate lyase.